Here is a 161-residue protein sequence, read N- to C-terminus: Monooxygenase AgnL5 (161 aa).

The protein belongs to the avfA family.

It participates in secondary metabolite biosynthesis. Its function is as follows. Monooxygenase; part of the gene cluster that mediates the biosynthesis of agnestins, dihydroxy-xanthone metabolites. The pathway begins with the assembly and cyclization of atrochrysone thioester by the non-reducing polyketide synthase Agnpks1. The atrochrysone carboxyl ACP thioesterase AgnL7 then breaks the thioester bond and releases the atrochrysone carboxylic acid as the first enzyme-free intermediate. The decarboxylase AgnL1 then catalyzes the concerted decarboxylation-elimination required to convert atochrysone carboxylic acid into emodin anthrone, which is further oxidized to emodin by the anthrone oxygenase AgnL2. Emodin then undergoes reduction catalyzed by the oxidoreductase AgnL4 to yield the dihydroquinone tautomer which is the substrate for reduction by the short chain dehydrogenase AgnL6 reduction to produce hydroxyketone, followed by AgnL8 dehydration and likely spontaneous autoxidation to chrysophanol. Baeyer-Villiger oxidation by the oxidase AgnL3 leads to monodictyphenone via cleavage of the C-10/C-10a bond of chrysophanol. Alternative cleavage at the C-4a/C-10 bond of chrysophanol also leads to the formation some cephalone F. Further conversion to agnestins A and B, requires reduction to dihydro-monodictyphenone, oxidation to agnestin C probably via an epoxide, and rearrangement to either agnestin A or agnestin B directly, although agnestin A or agnestin B can also interconvert. Within the cluster, AgnR1 is the only unassigned oxidoreductase present which could be involved in this conversion. However, AgnR1 seems not to be involved in this step, and thus genes involved in the proposed oxidation/reduction may be located elsewhere on the genome. Further agnestin A derivatives are probably formed by spontaneous decarboxylations, dehydrations and methanolysis reactions. This Paecilomyces divaricatus (Penicillium divaricatum) protein is Monooxygenase AgnL5.